The chain runs to 98 residues: NADH-ubiquinone oxidoreductase chain 4L (98 aa).

A run of 3 helical transmembrane segments spans residues 1–21, 26–46, and 61–81; these read MTPT…GMLI, LMAS…MTAV, and IIML…LVSI.

The protein belongs to the complex I subunit 4L family. As to quaternary structure, core subunit of respiratory chain NADH dehydrogenase (Complex I) which is composed of 45 different subunits.

Its subcellular location is the mitochondrion inner membrane. The enzyme catalyses a ubiquinone + NADH + 5 H(+)(in) = a ubiquinol + NAD(+) + 4 H(+)(out). In terms of biological role, core subunit of the mitochondrial membrane respiratory chain NADH dehydrogenase (Complex I) which catalyzes electron transfer from NADH through the respiratory chain, using ubiquinone as an electron acceptor. Part of the enzyme membrane arm which is embedded in the lipid bilayer and involved in proton translocation. In Papio hamadryas (Hamadryas baboon), this protein is NADH-ubiquinone oxidoreductase chain 4L (MT-ND4L).